The primary structure comprises 280 residues: RNA polymerase II holoenzyme cyclin-like subunit (280 aa).

The Cyclin N-terminal domain maps to 23-150 (ERRKGLEDIF…LIEELGTYLV (128 aa)).

The protein belongs to the cyclin family. Cyclin C subfamily. Component of the SRB8-11 complex, a regulatory module of the Mediator complex.

It localises to the nucleus. Component of the SRB8-11 complex. The SRB8-11 complex is a regulatory module of the Mediator complex which is itself involved in regulation of basal and activated RNA polymerase II-dependent transcription. The SRB8-11 complex may be involved in the transcriptional repression of a subset of genes regulated by Mediator. It may inhibit the association of the Mediator complex with RNA polymerase II to form the holoenzyme complex. The SRB8-11 complex phosphorylates the C-terminal domain (CTD) of the largest subunit of RNA polymerase II. The protein is RNA polymerase II holoenzyme cyclin-like subunit (SSN8) of Yarrowia lipolytica (strain CLIB 122 / E 150) (Yeast).